The chain runs to 1315 residues: Probable nucleoporin C890.06 (1315 aa).

This sequence belongs to the non-repetitive/WGA-negative nucleoporin family.

The protein localises to the cytoplasm. It localises to the nucleus. The polypeptide is Probable nucleoporin C890.06 (Schizosaccharomyces pombe (strain 972 / ATCC 24843) (Fission yeast)).